The following is a 360-amino-acid chain: Luc7-like protein (360 aa).

Positions 143–206 (KEQNSKITEL…QEKNENKRMS (64 aa)) form a coiled coil. The disordered stretch occupies residues 255–360 (LGRTDFYNAP…DDRRKRDRNY (106 aa)). The span at 269 to 293 (DSYRDDRRSSSSSYHDIDGRRDHRY) shows a compositional bias: basic and acidic residues. Residues 312-321 (NNGRGSSRDN) are compositionally biased toward low complexity. Over residues 329 to 360 (RDYRNDHGKDYDRKRERDYYNDDDRRKRDRNY) the composition is skewed to basic and acidic residues.

The protein belongs to the Luc7 family.

The protein resides in the nucleus. In terms of biological role, may play a role in RNA splicing. This Dictyostelium discoideum (Social amoeba) protein is Luc7-like protein (crop).